A 382-amino-acid polypeptide reads, in one-letter code: Lipid-A-disaccharide synthase (382 aa).

This sequence belongs to the LpxB family.

The catalysed reaction is 2-N,3-O-bis[(3R)-3-hydroxytetradecanoyl]-alpha-D-glucosaminyl 1-phosphate + UDP-2-N,3-O-bis[(3R)-3-hydroxytetradecanoyl]-alpha-D-glucosamine = lipid A disaccharide (E. coli) + UDP + H(+). It catalyses the reaction a lipid X + a UDP-2-N,3-O-bis[(3R)-3-hydroxyacyl]-alpha-D-glucosamine = a lipid A disaccharide + UDP + H(+). The protein operates within glycolipid biosynthesis; lipid IV(A) biosynthesis; lipid IV(A) from (3R)-3-hydroxytetradecanoyl-[acyl-carrier-protein] and UDP-N-acetyl-alpha-D-glucosamine: step 5/6. Functionally, condensation of UDP-2,3-diacylglucosamine and 2,3-diacylglucosamine-1-phosphate to form lipid A disaccharide, a precursor of lipid A, a phosphorylated glycolipid that anchors the lipopolysaccharide to the outer membrane of the cell. The polypeptide is Lipid-A-disaccharide synthase (Escherichia coli O127:H6 (strain E2348/69 / EPEC)).